The sequence spans 87 residues: Large ribosomal subunit protein bL31B (87 aa).

It belongs to the bacterial ribosomal protein bL31 family. Type B subfamily. Part of the 50S ribosomal subunit.

This Ralstonia nicotianae (strain ATCC BAA-1114 / GMI1000) (Ralstonia solanacearum) protein is Large ribosomal subunit protein bL31B.